The chain runs to 347 residues: NADH-ubiquinone oxidoreductase chain 2 (347 aa).

11 helical membrane passes run methionine 1–alanine 21, histidine 25–threonine 45, alanine 55–leucine 75, leucine 96–proline 116, threonine 123–tyrosine 143, isoleucine 145–glycine 165, isoleucine 178–proline 198, asparagine 199–leucine 219, leucine 237–leucine 257, glycine 274–methionine 294, and leucine 324–phenylalanine 344.

This sequence belongs to the complex I subunit 2 family. Core subunit of respiratory chain NADH dehydrogenase (Complex I) which is composed of 45 different subunits. Interacts with TMEM242.

The protein resides in the mitochondrion inner membrane. The enzyme catalyses a ubiquinone + NADH + 5 H(+)(in) = a ubiquinol + NAD(+) + 4 H(+)(out). Its function is as follows. Core subunit of the mitochondrial membrane respiratory chain NADH dehydrogenase (Complex I) which catalyzes electron transfer from NADH through the respiratory chain, using ubiquinone as an electron acceptor. Essential for the catalytic activity and assembly of complex I. The chain is NADH-ubiquinone oxidoreductase chain 2 from Symphalangus syndactylus (Siamang).